Reading from the N-terminus, the 1003-residue chain is Glycine--tRNA ligase (1003 aa).

A glycine--tRNA ligase alpha subunit region spans residues 1–310 (MSSQPLTLQA…VTPKKIPTIC (310 aa)). Residues 311 to 1003 (QPEDFLLEIG…CFGFYAWDVL (693 aa)) form a glycine--tRNA ligase beta subunit region.

Belongs to the class-II aminoacyl-tRNA synthetase family.

It localises to the cytoplasm. The enzyme catalyses tRNA(Gly) + glycine + ATP = glycyl-tRNA(Gly) + AMP + diphosphate. The protein is Glycine--tRNA ligase (glyQS) of Chlamydia trachomatis serovar L2 (strain ATCC VR-902B / DSM 19102 / 434/Bu).